Here is a 418-residue protein sequence, read N- to C-terminus: Glutamyl-tRNA reductase (418 aa).

Substrate is bound by residues 49–52, Ser109, 114–116, and Gln120; these read TCNR and EPQ. The active-site Nucleophile is Cys50. An NADP(+)-binding site is contributed by 189–194; sequence GAGETI.

The protein belongs to the glutamyl-tRNA reductase family. Homodimer.

It carries out the reaction (S)-4-amino-5-oxopentanoate + tRNA(Glu) + NADP(+) = L-glutamyl-tRNA(Glu) + NADPH + H(+). It functions in the pathway porphyrin-containing compound metabolism; protoporphyrin-IX biosynthesis; 5-aminolevulinate from L-glutamyl-tRNA(Glu): step 1/2. Catalyzes the NADPH-dependent reduction of glutamyl-tRNA(Glu) to glutamate 1-semialdehyde (GSA). The chain is Glutamyl-tRNA reductase from Escherichia coli O1:K1 / APEC.